Here is a 632-residue protein sequence, read N- to C-terminus: Biosynthetic arginine decarboxylase (632 aa).

Lysine 101 bears the N6-(pyridoxal phosphate)lysine mark. A substrate-binding site is contributed by 281-291 (FDVGGGLGVDY).

This sequence belongs to the Orn/Lys/Arg decarboxylase class-II family. SpeA subfamily. It depends on Mg(2+) as a cofactor. Pyridoxal 5'-phosphate serves as cofactor.

The enzyme catalyses L-arginine + H(+) = agmatine + CO2. It functions in the pathway amine and polyamine biosynthesis; agmatine biosynthesis; agmatine from L-arginine: step 1/1. Functionally, catalyzes the biosynthesis of agmatine from arginine. The protein is Biosynthetic arginine decarboxylase of Salmonella agona (strain SL483).